A 322-amino-acid chain; its full sequence is CPX chromosomal region candidate gene 1 protein homolog (322 aa).

2 stretches are compositionally biased toward polar residues: residues Met1–Pro23 and Thr37–Asp78. Residues Met1–Glu83 form a disordered region.

This Mus musculus (Mouse) protein is CPX chromosomal region candidate gene 1 protein homolog (Cpxcr1).